A 98-amino-acid polypeptide reads, in one-letter code: Co-chaperonin GroES (98 aa).

It belongs to the GroES chaperonin family. In terms of assembly, heptamer of 7 subunits arranged in a ring. Interacts with the chaperonin GroEL.

The protein resides in the cytoplasm. In terms of biological role, together with the chaperonin GroEL, plays an essential role in assisting protein folding. The GroEL-GroES system forms a nano-cage that allows encapsulation of the non-native substrate proteins and provides a physical environment optimized to promote and accelerate protein folding. GroES binds to the apical surface of the GroEL ring, thereby capping the opening of the GroEL channel. This chain is Co-chaperonin GroES, found in Micrococcus luteus (strain ATCC 4698 / DSM 20030 / JCM 1464 / CCM 169 / CCUG 5858 / IAM 1056 / NBRC 3333 / NCIMB 9278 / NCTC 2665 / VKM Ac-2230) (Micrococcus lysodeikticus).